The primary structure comprises 84 residues: Small ribosomal subunit protein bS20 (84 aa).

Belongs to the bacterial ribosomal protein bS20 family.

Its function is as follows. Binds directly to 16S ribosomal RNA. The protein is Small ribosomal subunit protein bS20 of Levilactobacillus brevis (strain ATCC 367 / BCRC 12310 / CIP 105137 / JCM 1170 / LMG 11437 / NCIMB 947 / NCTC 947) (Lactobacillus brevis).